Here is a 261-residue protein sequence, read N- to C-terminus: Hydroxyethylthiazole kinase (261 aa).

Position 38 (Met-38) interacts with substrate. 2 residues coordinate ATP: Arg-114 and Thr-159. Gly-186 contributes to the substrate binding site.

It belongs to the Thz kinase family. It depends on Mg(2+) as a cofactor.

The enzyme catalyses 5-(2-hydroxyethyl)-4-methylthiazole + ATP = 4-methyl-5-(2-phosphooxyethyl)-thiazole + ADP + H(+). It functions in the pathway cofactor biosynthesis; thiamine diphosphate biosynthesis; 4-methyl-5-(2-phosphoethyl)-thiazole from 5-(2-hydroxyethyl)-4-methylthiazole: step 1/1. Its function is as follows. Catalyzes the phosphorylation of the hydroxyl group of 4-methyl-5-beta-hydroxyethylthiazole (THZ). This is Hydroxyethylthiazole kinase from Streptococcus suis (strain 05ZYH33).